Consider the following 372-residue polypeptide: Queuine tRNA-ribosyltransferase (372 aa).

D92 serves as the catalytic Proton acceptor. Substrate-binding positions include D92–Y96, D146, Q188, and G215. Positions G246 to E252 are RNA binding. The Nucleophile role is filled by D265. Residues T270–R274 are RNA binding; important for wobble base 34 recognition. Zn(2+)-binding residues include C303, C305, C308, and H334.

Belongs to the queuine tRNA-ribosyltransferase family. In terms of assembly, homodimer. Within each dimer, one monomer is responsible for RNA recognition and catalysis, while the other monomer binds to the replacement base PreQ1. Zn(2+) is required as a cofactor.

It carries out the reaction 7-aminomethyl-7-carbaguanine + guanosine(34) in tRNA = 7-aminomethyl-7-carbaguanosine(34) in tRNA + guanine. It functions in the pathway tRNA modification; tRNA-queuosine biosynthesis. Catalyzes the base-exchange of a guanine (G) residue with the queuine precursor 7-aminomethyl-7-deazaguanine (PreQ1) at position 34 (anticodon wobble position) in tRNAs with GU(N) anticodons (tRNA-Asp, -Asn, -His and -Tyr). Catalysis occurs through a double-displacement mechanism. The nucleophile active site attacks the C1' of nucleotide 34 to detach the guanine base from the RNA, forming a covalent enzyme-RNA intermediate. The proton acceptor active site deprotonates the incoming PreQ1, allowing a nucleophilic attack on the C1' of the ribose to form the product. After dissociation, two additional enzymatic reactions on the tRNA convert PreQ1 to queuine (Q), resulting in the hypermodified nucleoside queuosine (7-(((4,5-cis-dihydroxy-2-cyclopenten-1-yl)amino)methyl)-7-deazaguanosine). The polypeptide is Queuine tRNA-ribosyltransferase (Prochlorococcus marinus (strain MIT 9215)).